The chain runs to 195 residues: Thymidine kinase (195 aa).

ATP is bound by residues 15–22 and 88–91; these read GSMFSGKS and DEVQ. Glutamate 89 (proton acceptor) is an active-site residue. Zn(2+)-binding residues include cysteine 145, cysteine 148, cysteine 183, and cysteine 186.

Belongs to the thymidine kinase family. Homotetramer.

The protein localises to the cytoplasm. It catalyses the reaction thymidine + ATP = dTMP + ADP + H(+). This is Thymidine kinase from Bacillus cereus (strain AH187).